The chain runs to 1170 residues: DNA-directed RNA polymerase subunit beta (1170 aa).

The protein belongs to the RNA polymerase beta chain family. The RNAP catalytic core consists of 2 alpha, 1 beta, 1 beta' and 1 omega subunit. When a sigma factor is associated with the core the holoenzyme is formed, which can initiate transcription.

The enzyme catalyses RNA(n) + a ribonucleoside 5'-triphosphate = RNA(n+1) + diphosphate. Its function is as follows. DNA-dependent RNA polymerase catalyzes the transcription of DNA into RNA using the four ribonucleoside triphosphates as substrates. The protein is DNA-directed RNA polymerase subunit beta of Corynebacterium urealyticum (strain ATCC 43042 / DSM 7109).